Consider the following 625-residue polypeptide: BTB/POZ domain-containing protein At5g48130 (625 aa).

Positions 41–105 (ASVHVRVCNK…IYGCPTLIHP (65 aa)) constitute a BTB domain. Residues 217-469 (DTWIKDLTDL…VQALFIQQLN (253 aa)) form the NPH3 domain. Over residues 494–507 (VPSSRPLTSQQSPC) the composition is skewed to polar residues. Residues 494–513 (VPSSRPLTSQQSPCTDDETG) are disordered.

It belongs to the NPH3 family.

Its pathway is protein modification; protein ubiquitination. May act as a substrate-specific adapter of an E3 ubiquitin-protein ligase complex (CUL3-RBX1-BTB) which mediates the ubiquitination and subsequent proteasomal degradation of target proteins. This chain is BTB/POZ domain-containing protein At5g48130, found in Arabidopsis thaliana (Mouse-ear cress).